A 43-amino-acid chain; its full sequence is uncharacterized protein (43 aa).

Positions 1 to 16 (MKLLNFILIIFNALKS) are cleaved as a signal peptide. N37 carries N-linked (GlcNAc...) asparagine; by host glycosylation.

This is an uncharacterized protein from Acheta domesticus (House cricket).